The chain runs to 68 residues: DNA gyrase inhibitor YacG (68 aa).

The Zn(2+) site is built by Cys10, Cys13, Cys29, and Cys33.

It belongs to the DNA gyrase inhibitor YacG family. As to quaternary structure, interacts with GyrB. Requires Zn(2+) as cofactor.

In terms of biological role, inhibits all the catalytic activities of DNA gyrase by preventing its interaction with DNA. Acts by binding directly to the C-terminal domain of GyrB, which probably disrupts DNA binding by the gyrase. This Haemophilus influenzae (strain PittGG) protein is DNA gyrase inhibitor YacG.